The chain runs to 110 residues: Protein RnfH (110 aa).

The tract at residues 86–110 is disordered; the sequence is RQRRVEKSRQEGSVEGRKWLPKDSR. The span at 88 to 110 shows a compositional bias: basic and acidic residues; the sequence is RRVEKSRQEGSVEGRKWLPKDSR.

The protein belongs to the UPF0125 (RnfH) family.

The sequence is that of Protein RnfH from Paraburkholderia phymatum (strain DSM 17167 / CIP 108236 / LMG 21445 / STM815) (Burkholderia phymatum).